Here is a 294-residue protein sequence, read N- to C-terminus: UPF0761 membrane protein YPTB0027 (294 aa).

Transmembrane regions (helical) follow at residues 44 to 64, 67 to 87, 108 to 128, 136 to 156, 185 to 205, 212 to 232, and 246 to 266; these read LLSL…FPMF, ISIK…GDII, GLIV…NIIW, LVFS…LVGA, VFPL…VPTV, ALIG…GFAM, and VLAV…IVLL.

It belongs to the UPF0761 family.

It is found in the cell inner membrane. This Yersinia pseudotuberculosis serotype I (strain IP32953) protein is UPF0761 membrane protein YPTB0027.